A 261-amino-acid chain; its full sequence is Aromatic peroxygenase (261 aa).

Residue cysteine 36 coordinates heme. 4 N-linked (GlcNAc...) asparagine glycosylation sites follow: asparagine 100, asparagine 137, asparagine 141, and asparagine 220.

This sequence belongs to the chloroperoxidase family. Heme b is required as a cofactor. N-glycosylated.

Aromatic peroxidase that oxidizes aryl alcohols into the corresponding aldehydes and then into the corresponding benzoic acids. Catalyzes the regioselective peroxide-dependent hydroxylation of naphthalene to 1-naphthol and to a far lesser extent 2-naphthol via a naphthalene 1,2-oxide intermediate. Halogenates phenol to 2-bromophenol and 4-bromophenol. Oxidizes the sulfur-containing heterocycle dibenzothiophene to yield sulfoxidation products, and trace amounts of ring-hydroxylation products. The protein is Aromatic peroxygenase of Coprinellus radians (Coprophilous mushroom).